A 20-amino-acid chain; its full sequence is DDSMEEVVTVFIRTGSSLKA.

Dimer of 18 kDa and 60 kDa subunit.

Its subcellular location is the microsome membrane. It is found in the endoplasmic reticulum membrane. In terms of biological role, may have spermidine-binding activity. In Zea mays (Maize), this protein is Putative 18 kDa spermidine-binding protein.